We begin with the raw amino-acid sequence, 425 residues long: Serine--tRNA ligase (425 aa).

232–234 (TSE) is an L-serine binding site. ATP-binding positions include 263–265 (RRE) and V279. E286 provides a ligand contact to L-serine. 350–353 (EAVS) contacts ATP. T387 lines the L-serine pocket.

This sequence belongs to the class-II aminoacyl-tRNA synthetase family. Type-1 seryl-tRNA synthetase subfamily. In terms of assembly, homodimer. The tRNA molecule binds across the dimer.

The protein resides in the cytoplasm. It catalyses the reaction tRNA(Ser) + L-serine + ATP = L-seryl-tRNA(Ser) + AMP + diphosphate + H(+). The catalysed reaction is tRNA(Sec) + L-serine + ATP = L-seryl-tRNA(Sec) + AMP + diphosphate + H(+). It participates in aminoacyl-tRNA biosynthesis; selenocysteinyl-tRNA(Sec) biosynthesis; L-seryl-tRNA(Sec) from L-serine and tRNA(Sec): step 1/1. In terms of biological role, catalyzes the attachment of serine to tRNA(Ser). Is also able to aminoacylate tRNA(Sec) with serine, to form the misacylated tRNA L-seryl-tRNA(Sec), which will be further converted into selenocysteinyl-tRNA(Sec). The polypeptide is Serine--tRNA ligase (Methanoculleus marisnigri (strain ATCC 35101 / DSM 1498 / JR1)).